The following is a 426-amino-acid chain: Enolase (426 aa).

Residues 38–60 form a disordered region; the sequence is PSGASTGAHEAVEKRDGDKSRYG. Over residues 47-58 the composition is skewed to basic and acidic residues; that stretch reads EAVEKRDGDKSR. Glutamine 163 serves as a coordination point for (2R)-2-phosphoglycerate. Glutamate 205 acts as the Proton donor in catalysis. Mg(2+) contacts are provided by aspartate 242, glutamate 285, and aspartate 312. Residues lysine 337, arginine 366, serine 367, and lysine 388 each coordinate (2R)-2-phosphoglycerate. The Proton acceptor role is filled by lysine 337.

It belongs to the enolase family. It depends on Mg(2+) as a cofactor.

It is found in the cytoplasm. It localises to the secreted. The protein localises to the cell surface. The enzyme catalyses (2R)-2-phosphoglycerate = phosphoenolpyruvate + H2O. The protein operates within carbohydrate degradation; glycolysis; pyruvate from D-glyceraldehyde 3-phosphate: step 4/5. Functionally, catalyzes the reversible conversion of 2-phosphoglycerate (2-PG) into phosphoenolpyruvate (PEP). It is essential for the degradation of carbohydrates via glycolysis. This chain is Enolase, found in Caulobacter sp. (strain K31).